Reading from the N-terminus, the 314-residue chain is Porphobilinogen deaminase (314 aa).

S-(dipyrrolylmethanemethyl)cysteine is present on Cys-249.

Belongs to the HMBS family. Monomer. Dipyrromethane is required as a cofactor.

The catalysed reaction is 4 porphobilinogen + H2O = hydroxymethylbilane + 4 NH4(+). Its pathway is porphyrin-containing compound metabolism; protoporphyrin-IX biosynthesis; coproporphyrinogen-III from 5-aminolevulinate: step 2/4. Tetrapolymerization of the monopyrrole PBG into the hydroxymethylbilane pre-uroporphyrinogen in several discrete steps. In Brucella abortus (strain S19), this protein is Porphobilinogen deaminase.